Here is a 376-residue protein sequence, read N- to C-terminus: Growth/differentiation factor 8 (376 aa).

Residues 1 to 24 (MIQKPQMYVYIYLFVLIAAGPVDL) form the signal peptide. A propeptide spanning residues 25 to 267 (NEDSEREANV…VTDTPKRSRR (243 aa)) is cleaved from the precursor. The N-linked (GlcNAc...) asparagine glycan is linked to Asn72. 4 disulfides stabilise this stretch: Cys273/Cys283, Cys282/Cys341, Cys310/Cys373, and Cys314/Cys375.

It belongs to the TGF-beta family. Homodimer; disulfide-linked. Interacts with WFIKKN2, leading to inhibit its activity. Interacts with FSTL3. Post-translationally, synthesized as large precursor molecule that undergoes proteolytic cleavage to generate an N-terminal propeptide and a disulfide linked C-terminal dimer, which is the biologically active molecule. The circulating form consists of a latent complex of the C-terminal dimer and other proteins, including its propeptide, which maintain the C-terminal dimer in a latent, inactive state. Ligand activation requires additional cleavage of the prodomain by a tolloid-like metalloproteinase.

The protein resides in the secreted. Acts specifically as a negative regulator of skeletal muscle growth. In Rattus norvegicus (Rat), this protein is Growth/differentiation factor 8 (Mstn).